We begin with the raw amino-acid sequence, 290 residues long: uncharacterized protein (290 aa).

Disordered regions lie at residues 89–157 (CSEN…EELS), 172–217 (MANT…MESS), and 261–290 (TANT…AVKK). Composition is skewed to basic and acidic residues over residues 106 to 124 (DFSK…EKQP) and 142 to 152 (KTEKLVSKEPS). Polar residues-rich tracts occupy residues 172–183 (MANTSSSANRTG) and 193–202 (KPTTAVQAST). 2 stretches are compositionally biased toward low complexity: residues 207 to 217 (MSSAESAMESS) and 274 to 290 (PSSE…AVKK).

This is an uncharacterized protein from Caenorhabditis elegans.